We begin with the raw amino-acid sequence, 141 residues long: MTKTAKVSDIVRDWVVLDAKDKVFGRLITEIAVLLRGKHRPFYTPNVDCGDFVVVINANKVKFSGMKLEDKEYFTHSGYFGSTKSKTLQEMLEKTPEKLYHLAVRGMLPKTKLGKAMIKKLKVYRDDKHPHTAQTSKKDAK.

This sequence belongs to the universal ribosomal protein uL13 family. As to quaternary structure, part of the 50S ribosomal subunit.

This protein is one of the early assembly proteins of the 50S ribosomal subunit, although it is not seen to bind rRNA by itself. It is important during the early stages of 50S assembly. The chain is Large ribosomal subunit protein uL13 from Helicobacter acinonychis (strain Sheeba).